We begin with the raw amino-acid sequence, 247 residues long: tRNA pseudouridine synthase A (247 aa).

The Nucleophile role is filled by D58. Y116 is a binding site for substrate.

The protein belongs to the tRNA pseudouridine synthase TruA family. In terms of assembly, homodimer.

It catalyses the reaction uridine(38/39/40) in tRNA = pseudouridine(38/39/40) in tRNA. Formation of pseudouridine at positions 38, 39 and 40 in the anticodon stem and loop of transfer RNAs. The chain is tRNA pseudouridine synthase A from Hydrogenobaculum sp. (strain Y04AAS1).